Consider the following 718-residue polypeptide: Exostosin-2 (718 aa).

Topologically, residues M1–Y25 are cytoplasmic. A helical; Signal-anchor for type II membrane protein transmembrane segment spans residues Y26–W46. Topologically, residues P47–L718 are lumenal. 4 cysteine pairs are disulfide-bonded: C85/C90, C96/C151, C286/C300, and C318/C339. An N-linked (GlcNAc...) asparagine glycan is attached at N288. Residues L461, R465, N490, and N517 each contribute to the UDP site. UDP-N-acetyl-alpha-D-glucosamine-binding residues include R465, N490, N517, R522, D538, D539, and D540. 2 residues coordinate UDP: D538 and D539. Mn(2+) is bound at residue D540. Residues Y582 and S584 each coordinate a protein. A disulfide bridge links C626 with C676. UDP-N-acetyl-alpha-D-glucosamine-binding residues include E627 and D628. N-linked (GlcNAc...) asparagine glycosylation is present at N637. K651 and K653 together coordinate a protein. R673 contributes to the UDP-N-acetyl-alpha-D-glucosamine binding site.

It belongs to the glycosyltransferase 47 family. In terms of assembly, part of the heparan sulfate polymerase, a dimeric complex composed of EXT1 and EXT2. Could also form homooligomeric complexes. Interacts with NDST1. Interacts with GALNT5. Requires Mn(2+) as cofactor. Post-translationally, a soluble form is generated by proteolytic processing. In terms of processing, N-glycosylated at Asn-637.

Its subcellular location is the golgi apparatus membrane. The protein localises to the golgi apparatus. It is found in the cis-Golgi network membrane. It localises to the endoplasmic reticulum membrane. The protein resides in the secreted. The catalysed reaction is 3-O-{[(1-&gt;4)-beta-D-GlcA-(1-&gt;4)-alpha-D-GlcNAc](n)-(1-&gt;4)-beta-D-GlcA-(1-&gt;3)-beta-D-Gal-(1-&gt;3)-beta-D-Gal-(1-&gt;4)-beta-D-Xyl}-L-seryl-[protein] + UDP-N-acetyl-alpha-D-glucosamine = 3-O-{alpha-D-GlcNAc-[(1-&gt;4)-beta-D-GlcA-(1-&gt;4)-alpha-D-GlcNAc](n)-(1-&gt;4)-beta-D-GlcA-(1-&gt;3)-beta-D-Gal-(1-&gt;3)-beta-D-Gal-(1-&gt;4)-beta-D-Xyl}-L-seryl-[protein] + UDP + H(+). Its pathway is protein modification; protein glycosylation. Functionally, glycosyltransferase forming with EXT1 the heterodimeric heparan sulfate polymerase which catalyzes the elongation of the heparan sulfate glycan backbone. Glycan backbone extension consists in the alternating transfer of (1-&gt;4)-beta-D-GlcA and (1-&gt;4)-alpha-D-GlcNAc residues from their respective UDP-sugar donors. Both EXT1 and EXT2 are required for the full activity of the polymerase since EXT1 bears the N-acetylglucosaminyl-proteoglycan 4-beta-glucuronosyltransferase activity within the complex while EXT2 carries the glucuronosyl-N-acetylglucosaminyl-proteoglycan 4-alpha-N-acetylglucosaminyltransferase activity. Heparan sulfate proteoglycans are ubiquitous components of the extracellular matrix and play an important role in tissue homeostasis and signaling. In Bos taurus (Bovine), this protein is Exostosin-2.